The following is a 1243-amino-acid chain: Interphotoreceptor matrix proteoglycan 2 (1243 aa).

An N-terminal signal peptide occupies residues 1-27 (MIMFLPVGRMSLGILILFLTGGNLVSA). Residues 28–1106 (SEERQEPMHA…EFVSEPFVIG (1079 aa)) are Extracellular-facing. The segment at 205 to 234 (GLASESSAASPQESISNEIENVTEEPTQPA) is disordered. Residues 207 to 220 (ASESSAASPQESIS) show a composition bias toward low complexity. Positions 221-230 (NEIENVTEEP) are enriched in polar residues. The N-linked (GlcNAc...) asparagine glycan is linked to asparagine 225. The SEA 1 domain occupies 235–349 (AEQIAEFSIQ…KPTAVYTISN (115 aa)). The segment at 255 to 263 (RDPSSALYR) is hyaluronan-binding motif involved in chondroitin sulfate A-binding. N-linked (GlcNAc...) asparagine glycosylation is found at asparagine 297, asparagine 316, and asparagine 366. 3 O-linked (GalNAc...) threonine glycosylation sites follow: threonine 427, threonine 428, and threonine 429. N-linked (GlcNAc...) asparagine glycosylation occurs at asparagine 582. O-linked (GalNAc...) threonine glycosylation is found at threonine 701, threonine 704, and threonine 712. Basic and acidic residues predominate over residues 748-762 (EDMVHTESSSHKELD). The disordered stretch occupies residues 748–768 (EDMVHTESSSHKELDSEVPVS). 2 O-linked (GalNAc...) threonine glycosylation sites follow: threonine 817 and threonine 888. The SEA 2 domain occupies 900 to 1013 (GALVVFFSLR…YSLDVESGDE (114 aa)). 2 N-linked (GlcNAc...) asparagine glycosylation sites follow: asparagine 945 and asparagine 959. EGF-like domains lie at 1013-1054 (EANP…LPCQ) and 1055-1096 (SLCD…QHCE). 6 disulfides stabilise this stretch: cysteine 1017-cysteine 1028, cysteine 1022-cysteine 1039, cysteine 1041-cysteine 1053, cysteine 1057-cysteine 1070, cysteine 1064-cysteine 1080, and cysteine 1082-cysteine 1095. Residues 1083–1091 (RVGSNWWYR) are hyaluronan-binding motif involved in chondroitin sulfate C-binding. Residues 1107–1127 (ITIASVVSFLLVASAVVFFLV) traverse the membrane as a helical segment. The segment at 1128–1136 (KMLQAQNVR) is hyaluronan-binding motif involved in chondroitin sulfate A- and C-binding. Residues 1128 to 1243 (KMLQAQNVRR…FVREHQMEEL (116 aa)) are Cytoplasmic-facing. A hyaluronan-binding motif involved in chondroitin sulfate C-binding region spans residues 1139-1147 (RQRPTSSSR). Residues 1212 to 1220 (KEEIQERMR) form a hyaluronan-binding motif involved in chondroitin sulfate A- and C-binding motif region.

Expressed in the retina (at protein level). Expressed in the pineal gland.

It is found in the photoreceptor outer segment membrane. The protein resides in the photoreceptor inner segment membrane. The protein localises to the secreted. Its subcellular location is the extracellular space. It localises to the extracellular matrix. It is found in the interphotoreceptor matrix. In terms of biological role, chondroitin sulfate- and hyaluronan-binding proteoglycan involved in the organization of interphotoreceptor matrix; may participate in the maturation and maintenance of the light-sensitive photoreceptor outer segment. Binds heparin. This is Interphotoreceptor matrix proteoglycan 2 (Impg2) from Mus musculus (Mouse).